The chain runs to 334 residues: Glycerol-3-phosphate dehydrogenase [NAD(P)+] 2 (334 aa).

Residues tryptophan 16, arginine 36, arginine 37, and lysine 110 each contribute to the NADPH site. The sn-glycerol 3-phosphate site is built by lysine 110 and glycine 140. NADPH is bound at residue alanine 144. The sn-glycerol 3-phosphate site is built by lysine 195, aspartate 248, serine 258, arginine 259, and asparagine 260. Lysine 195 functions as the Proton acceptor in the catalytic mechanism. An NADPH-binding site is contributed by arginine 259. NADPH-binding residues include valine 282 and glutamate 284.

Belongs to the NAD-dependent glycerol-3-phosphate dehydrogenase family.

It localises to the cytoplasm. It carries out the reaction sn-glycerol 3-phosphate + NAD(+) = dihydroxyacetone phosphate + NADH + H(+). The catalysed reaction is sn-glycerol 3-phosphate + NADP(+) = dihydroxyacetone phosphate + NADPH + H(+). It functions in the pathway membrane lipid metabolism; glycerophospholipid metabolism. Its function is as follows. Catalyzes the reduction of the glycolytic intermediate dihydroxyacetone phosphate (DHAP) to sn-glycerol 3-phosphate (G3P), the key precursor for phospholipid synthesis. The polypeptide is Glycerol-3-phosphate dehydrogenase [NAD(P)+] 2 (Mycobacterium tuberculosis (strain ATCC 25618 / H37Rv)).